The primary structure comprises 261 residues: Ribosome biogenesis protein C3_06160C_A (261 aa).

Positions 1–38 are disordered; that stretch reads MPQNEYIEQHIKKHGRRLDYEERKRKKEAREGHRVAKD. 2 consecutive short sequence motifs (nuclear localization signal) follow at residues 11–18 and 51–58; these read IKKHGRRL and AKKRYAEK. The segment covering 17–37 has biased composition (basic and acidic residues); it reads RLDYEERKRKKEAREGHRVAK. The tract at residues 59-85 is disordered; it reads VAMKKKIKAHQESKVKGPSTPKAEDGE.

Belongs to the eukaryotic ribosomal protein eS8 family. Ribosome biogenesis protein NSA2 subfamily. In terms of assembly, component of the pre-66S ribosomal particle. Interacts with NOP7 and RRP1. Interacts with RSA4 (via WD repeats).

Its subcellular location is the nucleus. The protein resides in the nucleolus. Functionally, involved in the biogenesis of the 60S ribosomal subunit. May play a part in the quality control of pre-60S particles. This Candida albicans (strain SC5314 / ATCC MYA-2876) (Yeast) protein is Ribosome biogenesis protein C3_06160C_A.